The chain runs to 364 residues: Mannose-1-phosphate guanyltransferase (364 aa).

Belongs to the transferase hexapeptide repeat family.

It localises to the cytoplasm. It catalyses the reaction alpha-D-mannose 1-phosphate + GTP + H(+) = GDP-alpha-D-mannose + diphosphate. The protein operates within nucleotide-sugar biosynthesis; GDP-alpha-D-mannose biosynthesis; GDP-alpha-D-mannose from alpha-D-mannose 1-phosphate (GTP route): step 1/1. Functionally, involved in cell wall synthesis where it is required for glycosylation. Involved in cell cycle progression through cell-size checkpoint. This chain is Mannose-1-phosphate guanyltransferase (MPG1), found in Cryptococcus neoformans var. neoformans serotype D (strain B-3501A) (Filobasidiella neoformans).